Here is a 67-residue protein sequence, read N- to C-terminus: Large ribosomal subunit protein bL32 (67 aa).

The span at 1–19 shows a compositional bias: basic residues; it reads MAVPKRKQSRANTHARRSQ. The segment at 1-20 is disordered; it reads MAVPKRKQSRANTHARRSQW.

Belongs to the bacterial ribosomal protein bL32 family.

The chain is Large ribosomal subunit protein bL32 from Leifsonia xyli subsp. xyli (strain CTCB07).